Here is a 565-residue protein sequence, read N- to C-terminus: MVAEDAPVRGTCRVLFRTTTLIFLCTLLALSISILYESLIIQKQIMSQAGSTGSNFRLGSITDLLNNILSVANQIIYNSAVALPLQLDTLESTLLTAIKSLQTSDKLEQNCSWGAALINDNRYINGINQFYFSIAEGRNLTLGPLLNIPSFIPTATTPEGCTRIPSFSLTKTHWCYTHNVILNGCQDHVSSNQFVSMGIIEPTSAGFPSFRTLKTLYLSDGVNRKSCSISTVPGGCMMYCFVSTQPERDDYLSTAPPEQRIIIMYYNDTIVERIINPPGVLDVWATLNPGTGSGVYYLGWVLFPTYGGVIKDTSLWNNQANKYFIPQMVAALCSQNQATQVQNAKSSYYSSWFGNRMIQSGILACPLQQDLTNECLILPFSNDQVLMGAEGRLYMYGDSVYYYQRSNSWWPMTMLYKVTITFTNGQPSAISAQNVPTQQVPRPGTGDCSATNRCPGFCLKGVYADAWLLTNPSSTSTFGSEATFTGSYLNAATQRINPTMYIANNTQIISSQQFGSSGQEAAYGHTTCFRDTGSVMVYCIYIIELSSSLLGQFQIVPFIRQVTLS.

Over 1–20 (MVAEDAPVRGTCRVLFRTTT) the chain is Intravirion. A helical membrane pass occupies residues 21 to 41 (LIFLCTLLALSISILYESLII). Residues 42–565 (QKQIMSQAGS…VPFIRQVTLS (524 aa)) lie on the Virion surface side of the membrane. Asn-110 and Asn-139 each carry an N-linked (GlcNAc...) asparagine; by host glycan. Cystine bridges form between Cys-161–Cys-185, Cys-175–Cys-236, and Cys-227–Cys-240. Residues 223–228 (NRKSCS) form an involved in neuraminidase activity region. The N-linked (GlcNAc...) asparagine; by host glycan is linked to Asn-267. Disulfide bonds link Cys-333–Cys-454, Cys-365–Cys-375, and Cys-448–Cys-458. Asn-504 carries an N-linked (GlcNAc...) asparagine; by host glycan. The cysteines at positions 528 and 539 are disulfide-linked.

Belongs to the paramyxoviruses hemagglutinin-neuraminidase family. In terms of assembly, homotetramer; composed of disulfide-linked homodimers. Interacts with F protein trimer.

Its subcellular location is the virion membrane. The protein resides in the host cell membrane. It carries out the reaction Hydrolysis of alpha-(2-&gt;3)-, alpha-(2-&gt;6)-, alpha-(2-&gt;8)- glycosidic linkages of terminal sialic acid residues in oligosaccharides, glycoproteins, glycolipids, colominic acid and synthetic substrates.. Functionally, attaches the virus to sialic acid-containing cell receptors and thereby initiating infection. Binding of HN protein to the receptor induces a conformational change that allows the F protein to trigger virion/cell membranes fusion. Neuraminidase activity ensures the efficient spread of the virus by dissociating the mature virions from the neuraminic acid containing glycoproteins. The chain is Hemagglutinin-neuraminidase (HN) from Parainfluenza virus 5 (isolate Canine/CPI-) (PIV5).